The chain runs to 179 residues: ADP-ribosylation factor (179 aa).

Glycine 2 is lipidated: N-myristoyl glycine. GTP is bound by residues 24–31 (GLDAAGKT), 67–71 (DVGGQ), and 126–129 (NKQD).

The protein belongs to the small GTPase superfamily. Arf family.

It is found in the golgi apparatus. Its function is as follows. GTP-binding protein involved in protein trafficking; may modulate vesicle budding and uncoating within the Golgi apparatus. In Candida albicans (strain SC5314 / ATCC MYA-2876) (Yeast), this protein is ADP-ribosylation factor (ARF1).